The sequence spans 432 residues: Solute carrier family 38 member 8 (432 aa).

Transmembrane regions (helical) follow at residues 29-49, 59-79, 103-123, 144-164, 175-195, 215-237, 253-273, 292-312, 345-365, 368-388, and 409-429; these read AVFI…PWAF, FLVA…LGYA, LCEI…LRVI, AAQN…LSAL, ILGT…YYLW, VFSV…SIYC, LSLL…FLTF, IIVA…IVLF, LPLT…LPDL, IISI…GLCL, and GILS…VAMV.

This sequence belongs to the amino acid/polyamine transporter 2 family. As to expression, expressed in neurons located in the gray matter. Highly expressed in thalamus, hypothalamus, amygdala and pons. Expressed in the CA3 area of hippocampus and in the Purkinje layer of the cerebellum (at protein level). Expressed in the eye.

It localises to the membrane. The protein localises to the cytoplasm. The protein resides in the cell cortex. Its subcellular location is the cell projection. It is found in the axon. It carries out the reaction L-glutamine(out) = L-glutamine(in). The catalysed reaction is L-alanine(in) = L-alanine(out). It catalyses the reaction L-histidine(out) = L-histidine(in). The enzyme catalyses L-aspartate(out) = L-aspartate(in). It carries out the reaction L-arginine(in) = L-arginine(out). The catalysed reaction is L-leucine(in) = L-leucine(out). Functionally, electrogenic sodium-dependent amino acid transporter with a preference for L-glutamine, L-alanine, L-histidine, L-aspartate and L-arginine. May facilitate glutamine uptake in both excitatory and inhibitory neurons. The transport mechanism and stoichiometry remain to be elucidated. This chain is Solute carrier family 38 member 8, found in Mus musculus (Mouse).